The sequence spans 254 residues: MWQLLLPTALLLLVSAGMRTEDLPKAVVFLEPQWYRVLEKDSVTLKCQGAYSPEDNSTQWFHNESLISSQASSYFIDAATVDDSGEYRCQTNLSTLSDPVQLEVHIGWLLLQAPRWVFKEEDPIHLRCHSWKNTALHKVTYLQNGKGRKYFHHNSDFYIPKATLKDSGSYFCRGLFGSKNVSSETVNITITQGLAVSTISSFFPPGYQVSFCLVMVLLFAVDTGLYFSVKTNIRSSTRDWKDHKFKWRKDPQDK.

Residues 1–16 form the signal peptide; it reads MWQLLLPTALLLLVSA. Over 17–208 the chain is Extracellular; it reads GMRTEDLPKA…ISSFFPPGYQ (192 aa). Ig-like C2-type domains follow at residues 24–105 and 107–189; these read PKAV…LEVH and GWLL…VNIT. Cys47 and Cys89 form a disulfide bridge. Asn56, Asn63, and Asn92 each carry an N-linked (GlcNAc...) asparagine glycan. The cysteines at positions 128 and 172 are disulfide-linked. Residues Asn180 and Asn187 are each glycosylated (N-linked (GlcNAc...) asparagine). The chain crosses the membrane as a helical span at residues 209–229; the sequence is VSFCLVMVLLFAVDTGLYFSV. The Cytoplasmic segment spans residues 230–254; it reads KTNIRSSTRDWKDHKFKWRKDPQDK. Residue Ser236 is modified to Phosphoserine; by PKC. Residue Thr237 is modified to Phosphothreonine; by PKC.

As to quaternary structure, forms a heterooligomeric complex with ITAM-containing signaling subunits, either a homodimer of CD247, a homodimer of FCER1G or a heterodimer of CD247 and FCER1G. Interacts (via transmembrane domain) with signaling subunits; this interaction is a prerequisite for receptor complex expression on the cell surface and intracellular signal transduction. Binds the Fc region of antigen-complexed IgG with a preference for IgG1 and IgG3 isotypes. Interacts with CD2; this interaction is involved in NK cell activation and cytotoxicity. Interacts with S100A4; this interaction inhibits PKC-dependent phosphorylation of FCGR3A. In terms of processing, glycosylated. Contains high mannose- and complex-type oligosaccharides. Glycosylation at Asn-180 is mandatory for high affinity binding to the Fc and for discrimination between fucosylated and afucosylated IgG glycoforms. Post-translationally, undergoes rapid ectodomain shedding upon NK cell stimulation. The soluble form is produced by a proteolytic cleavage mediated by ADAM17. Repeated stimulation causes receptor shedding, a mechanism that allows for increased NK cell motility and detachment from opsonized target cells while avoiding activation-induced NK cell apoptosis. Phosphorylated at RSSTR motif by PKC. The relevant physiological PKCs might be PRKCI, PRKCG, PRKCE, PRKCH and PRKCQ. Expressed in natural killer cells (at protein level). Expressed in a subset of circulating monocytes (at protein level).

It localises to the cell membrane. The protein resides in the secreted. In terms of biological role, receptor for the invariable Fc fragment of immunoglobulin gamma (IgG). Optimally activated upon binding of clustered antigen-IgG complexes displayed on cell surfaces, triggers lysis of antibody-coated cells, a process known as antibody-dependent cellular cytotoxicity (ADCC). Does not bind free monomeric IgG, thus avoiding inappropriate effector cell activation in the absence of antigenic trigger. Mediates IgG effector functions on natural killer (NK) cells. Binds antigen-IgG complexes generated upon infection and triggers NK cell-dependent cytokine production and degranulation to limit viral load and propagation. Involved in the generation of memory-like adaptive NK cells capable to produce high amounts of IFNG and to efficiently eliminate virus-infected cells via ADCC. Regulates NK cell survival and proliferation, in particular by preventing NK cell progenitor apoptosis. Fc-binding subunit that associates with CD247 and/or FCER1G adapters to form functional signaling complexes. Following the engagement of antigen-IgG complexes, triggers phosphorylation of immunoreceptor tyrosine-based activation motif (ITAM)-containing adapters with subsequent activation of phosphatidylinositol 3-kinase signaling and sustained elevation of intracellular calcium that ultimately drive NK cell activation. The ITAM-dependent signaling coupled to receptor phosphorylation by PKC mediates robust intracellular calcium flux that leads to production of pro-inflammatory cytokines, whereas in the absence of receptor phosphorylation it mainly activates phosphatidylinositol 3-kinase signaling leading to cell degranulation. Costimulates NK cells and trigger lysis of target cells independently of IgG binding. Mediates the antitumor activities of therapeutic antibodies. Upon ligation on monocytes triggers TNFA-dependent ADCC of IgG-coated tumor cells. Mediates enhanced ADCC in response to afucosylated IgGs. Its function is as follows. (Microbial infection) Involved in Dengue virus pathogenesis via antibody-dependent enhancement (ADE) mechanism. Secondary infection with Dengue virus triggers elevated levels of afucosylated non-neutralizing IgG1s with reactivity to viral envelope/E protein. Viral antigen-IgG1 complexes bind with high affinity to FCGR3A, facilitating virus entry in myeloid cells and subsequent viral replication. In Homo sapiens (Human), this protein is Low affinity immunoglobulin gamma Fc region receptor III-A.